Here is a 466-residue protein sequence, read N- to C-terminus: Benzoate transport protein (466 aa).

The Cytoplasmic segment spans residues 1–22 (MSREINVNQMIDDSKLTPFHWR). A helical transmembrane segment spans residues 23–43 (VIILSTLIIIFDGYDLVIYGV). Residues 44-60 (ALPLLMKEWAIDPVTAG) lie on the Periplasmic side of the membrane. The helical transmembrane segment at 61 to 81 (FIGSIALFGMMFGALIFGTIA) threads the bilayer. The Cytoplasmic segment spans residues 82–93 (DKLEHLGVSRKK). Residues 94–114 (VIAVCIILFSLCTVLCGFSET) form a helical membrane-spanning segment. The Periplasmic segment spans residues 115–119 (TTQFS). Residues 120–140 (IFRFLAGVGIGGVMPNVIALV) form a helical membrane-spanning segment. Residues 141-150 (SEYAPKKFKS) lie on the Cytoplasmic side of the membrane. Residues 151–171 (FFVTLMFSGYAIGGMTAAFLG) traverse the membrane as a helical segment. Topologically, residues 172–181 (SILVPLYGWK) are periplasmic. The chain crosses the membrane as a helical span at residues 182–202 (IMFMIAGIPLVLLLPLMKVLP). The Cytoplasmic segment spans residues 203-258 (ESIDYLVRKKKDETVRFIMTKMVPSYQYQPDHVFVLNSSNQNQAQAPVKMIFQEQR). The helical transmembrane segment at 259–279 (AFSTMMFWCSIFMTLIMVYAL) threads the bilayer. At 280 to 297 (GNWLPKLMIEAGYNLSKS) the chain is on the periplasmic side. The helical transmembrane segment at 298 to 318 (LIFLFSLNVGGMIGSILGGYL) threads the bilayer. Topologically, residues 319 to 325 (ADRYNVK) are cytoplasmic. A helical transmembrane segment spans residues 326–346 (FVTMGLLLLGAISLSLLSFQF). Topologically, residues 347–348 (SS) are periplasmic. A helical membrane pass occupies residues 349-369 (VILYILIACAGAASIGAQIML). The Cytoplasmic portion of the chain corresponds to 370 to 387 (LAYMAKFYAPNVRSTGIG). A helical membrane pass occupies residues 388–408 (WGLGMGRVGAILGPILTGWLL). At 409 to 414 (SLQLPH) the chain is on the periplasmic side. Residues 415 to 435 (FYNFLALSIPAVLGIVTVFLI) traverse the membrane as a helical segment. Over 436–466 (NDRRMYQPEPISPIANQNDTTTVKVNEAVSH) the chain is Cytoplasmic.

It belongs to the major facilitator superfamily. Aromatic acid:H(+) symporter (AAHS) (TC 2.A.1.15) family.

It is found in the cell inner membrane. Functionally, probable uptake of benzoate. In Acinetobacter baylyi (strain ATCC 33305 / BD413 / ADP1), this protein is Benzoate transport protein (benK).